A 263-amino-acid polypeptide reads, in one-letter code: N-acyl homoserine lactonase AttM (263 aa).

The Zn(2+) site is built by H103, H105, D107, H108, H180, D202, and H247.

The protein belongs to the metallo-beta-lactamase superfamily. The cofactor is Zn(2+).

It carries out the reaction an N-acyl-L-homoserine lactone + H2O = an N-acyl-L-homoserine + H(+). This chain is N-acyl homoserine lactonase AttM, found in Rhizobium johnstonii (strain DSM 114642 / LMG 32736 / 3841) (Rhizobium leguminosarum bv. viciae).